Consider the following 380-residue polypeptide: L-lactate dehydrogenase (380 aa).

One can recognise an FMN hydroxy acid dehydrogenase domain in the interval 1–380 (MIISSPNDYR…TRDSLVGLPR (380 aa)). Tyr-24 contributes to the substrate binding site. Positions 106 and 127 each coordinate FMN. Tyr-129 is a substrate binding site. FMN is bound at residue Thr-155. Arg-164 provides a ligand contact to substrate. Lys-251 provides a ligand contact to FMN. The Proton acceptor role is filled by His-275. Residue Arg-278 participates in substrate binding. 306–330 (DSGIRTGLDVVRMLALGAKGVLLGR) lines the FMN pocket.

It belongs to the FMN-dependent alpha-hydroxy acid dehydrogenase family. The cofactor is FMN.

The protein localises to the cell inner membrane. The enzyme catalyses (S)-lactate + A = pyruvate + AH2. Its function is as follows. Catalyzes the conversion of L-lactate to pyruvate. Is coupled to the respiratory chain. In Azorhizobium caulinodans (strain ATCC 43989 / DSM 5975 / JCM 20966 / LMG 6465 / NBRC 14845 / NCIMB 13405 / ORS 571), this protein is L-lactate dehydrogenase.